We begin with the raw amino-acid sequence, 416 residues long: Gamma-glutamyl phosphate reductase (416 aa).

The protein belongs to the gamma-glutamyl phosphate reductase family.

It is found in the cytoplasm. The catalysed reaction is L-glutamate 5-semialdehyde + phosphate + NADP(+) = L-glutamyl 5-phosphate + NADPH + H(+). It participates in amino-acid biosynthesis; L-proline biosynthesis; L-glutamate 5-semialdehyde from L-glutamate: step 2/2. Functionally, catalyzes the NADPH-dependent reduction of L-glutamate 5-phosphate into L-glutamate 5-semialdehyde and phosphate. The product spontaneously undergoes cyclization to form 1-pyrroline-5-carboxylate. The sequence is that of Gamma-glutamyl phosphate reductase from Streptococcus pyogenes serotype M1.